We begin with the raw amino-acid sequence, 455 residues long: uncharacterized protein (455 aa).

The next 11 helical transmembrane spans lie at 26–46 (FGPG…QLLI), 53–73 (GAWG…ISIG), 77–97 (LGVM…RSTA), 111–131 (WVVA…LAVI), 146–166 (ALRA…TGVW), 191–211 (AAGV…SLVV), 232–252 (LTVL…AIAV), 256–276 (AHIG…IPAL), 278–298 (ILAA…LIVG), 323–343 (LLVA…GGGG), and 357–377 (ALVL…VVIA). Residues 384-455 (PKRLRPAPPV…LSDEPPPRAD (72 aa)) form a disordered region.

It is found in the cell membrane. This is an uncharacterized protein from Mycobacterium tuberculosis (strain CDC 1551 / Oshkosh).